We begin with the raw amino-acid sequence, 353 residues long: Dihydroorotate dehydrogenase (quinone) (353 aa).

FMN is bound by residues 66-70 and Thr90; that span reads AGFDK. Residue Lys70 participates in substrate binding. Position 115-119 (115-119) interacts with substrate; that stretch reads NRMGF. The FMN site is built by Asn143 and Asn176. Asn176 contacts substrate. Ser179 acts as the Nucleophile in catalysis. Residue Asn181 participates in substrate binding. FMN is bound by residues Lys212 and Thr240. 241–242 contacts substrate; it reads NT. FMN is bound by residues Gly264, Gly293, and 314–315; that span reads YT.

The protein belongs to the dihydroorotate dehydrogenase family. Type 2 subfamily. In terms of assembly, monomer. It depends on FMN as a cofactor.

The protein localises to the cell membrane. It carries out the reaction (S)-dihydroorotate + a quinone = orotate + a quinol. It participates in pyrimidine metabolism; UMP biosynthesis via de novo pathway; orotate from (S)-dihydroorotate (quinone route): step 1/1. Catalyzes the conversion of dihydroorotate to orotate with quinone as electron acceptor. The chain is Dihydroorotate dehydrogenase (quinone) from Mycolicibacterium gilvum (strain PYR-GCK) (Mycobacterium gilvum (strain PYR-GCK)).